The following is a 161-amino-acid chain: Transcription antitermination protein NusB (161 aa).

It belongs to the NusB family.

In terms of biological role, involved in transcription antitermination. Required for transcription of ribosomal RNA (rRNA) genes. Binds specifically to the boxA antiterminator sequence of the ribosomal RNA (rrn) operons. The protein is Transcription antitermination protein NusB of Nitrobacter winogradskyi (strain ATCC 25391 / DSM 10237 / CIP 104748 / NCIMB 11846 / Nb-255).